Here is a 236-residue protein sequence, read N- to C-terminus: 2,3,4,5-tetrahydropyridine-2,6-dicarboxylate N-acetyltransferase (236 aa).

Belongs to the transferase hexapeptide repeat family. DapH subfamily.

It catalyses the reaction (S)-2,3,4,5-tetrahydrodipicolinate + acetyl-CoA + H2O = L-2-acetamido-6-oxoheptanedioate + CoA. Its pathway is amino-acid biosynthesis; L-lysine biosynthesis via DAP pathway; LL-2,6-diaminopimelate from (S)-tetrahydrodipicolinate (acetylase route): step 1/3. Catalyzes the transfer of an acetyl group from acetyl-CoA to tetrahydrodipicolinate. The chain is 2,3,4,5-tetrahydropyridine-2,6-dicarboxylate N-acetyltransferase from Clostridium botulinum (strain Alaska E43 / Type E3).